We begin with the raw amino-acid sequence, 259 residues long: Dihydroorotate dehydrogenase B (NAD(+)), electron transfer subunit (259 aa).

The region spanning Met2–Leu102 is the FAD-binding FR-type domain. FAD-binding positions include Arg53 to Ser56, Leu70 to Arg72, and Gly77 to Thr78. [2Fe-2S] cluster contacts are provided by Cys221, Cys226, Cys229, and Cys246.

This sequence belongs to the PyrK family. As to quaternary structure, heterotetramer of 2 PyrK and 2 PyrD type B subunits. The cofactor is [2Fe-2S] cluster. It depends on FAD as a cofactor.

It participates in pyrimidine metabolism; UMP biosynthesis via de novo pathway; orotate from (S)-dihydroorotate (NAD(+) route): step 1/1. Functionally, responsible for channeling the electrons from the oxidation of dihydroorotate from the FMN redox center in the PyrD type B subunit to the ultimate electron acceptor NAD(+). This is Dihydroorotate dehydrogenase B (NAD(+)), electron transfer subunit from Bacillus cereus (strain B4264).